Here is a 60-residue protein sequence, read N- to C-terminus: Ribosome biogenesis protein Nop10 (60 aa).

Residues 29 to 60 (CDGPTENSAPAPFSPEDPYGEYRRRVRRRASE) form a disordered region.

Belongs to the NOP10 family.

In terms of biological role, involved in ribosome biogenesis; more specifically in 18S rRNA pseudouridylation and in cleavage of pre-rRNA. This Halorubrum lacusprofundi (strain ATCC 49239 / DSM 5036 / JCM 8891 / ACAM 34) protein is Ribosome biogenesis protein Nop10.